A 171-amino-acid polypeptide reads, in one-letter code: UPF0098 protein aq_1250 (171 aa).

It belongs to the UPF0098 family.

This is UPF0098 protein aq_1250 from Aquifex aeolicus (strain VF5).